The sequence spans 301 residues: Ribosomal RNA small subunit methyltransferase H (301 aa).

S-adenosyl-L-methionine is bound by residues 35–37 (GGH), Asp-55, Phe-84, Asp-105, and Gln-112.

It belongs to the methyltransferase superfamily. RsmH family.

Its subcellular location is the cytoplasm. It carries out the reaction cytidine(1402) in 16S rRNA + S-adenosyl-L-methionine = N(4)-methylcytidine(1402) in 16S rRNA + S-adenosyl-L-homocysteine + H(+). Functionally, specifically methylates the N4 position of cytidine in position 1402 (C1402) of 16S rRNA. This Chloroflexus aggregans (strain MD-66 / DSM 9485) protein is Ribosomal RNA small subunit methyltransferase H.